Reading from the N-terminus, the 1275-residue chain is Streptococcal hemoprotein receptor (1275 aa).

Residues 1 to 26 (MKKISKCAFVAISALVLIQATQTVKS) form the signal peptide. The segment at 61–123 (GKEYYKHIEK…KKDGDILITF (63 aa)) is HID 1. 4 residues coordinate heme: Thr-87, Arg-196, Tyr-197, and Met-238. Positions 203 to 269 (IKALTQQITK…KGFEDVTITV (67 aa)) are HID 2. In terms of domain architecture, NEAT 1 spans 369 to 501 (LTEGTYTLNF…DMTFSKTVTK (133 aa)). 11 LRR repeats span residues 544–567 (LEQI…LKHA), 568–590 (KNIT…LFSQ), 592–614 (KQLR…TFKS), 616–638 (AQLR…LFQS), 639–662 (LHHL…PFEG), 664–686 (SRLT…ALEP), 687–710 (LTSL…IEKL), 712–733 (ALST…SFKN), 734–757 (LPKL…IFKQ), 759–781 (NQLT…VFPD), and 783–804 (ETLN…VRAL). The NEAT 2 domain occupies 976 to 1138 (LRDGIYYLNA…TTEKAKVVKE (163 aa)). 3 disordered regions span residues 1137 to 1174 (KETN…SAAT), 1186 to 1205 (KATG…DKAE), and 1210 to 1248 (LVRD…ESSS). Polar residues predominate over residues 1138–1166 (ETNNPQENSHLTSTDQLKGPQNRQQEKTP). Composition is skewed to basic and acidic residues over residues 1196–1205 (SKTDDTDKAE) and 1210–1229 (LVRD…TKTK). Residues 1250–1269 (YHLIAGLSSFMIVALGFIIG) form a helical membrane-spanning segment.

Its subcellular location is the cell membrane. With respect to regulation, may modulate heme uptake according to heme availability. In the presence of high heme concentrations, NEAT 1 facilitates fast heme delivery to Shp, whereas NEAT 2 serves as a temporary storage for heme on the bacterial surface. When heme availability is limiting, heme from NEAT 2 is transferred back to NEAT 1 and from there to Shp. Hemoprotein receptor that plays a central role in the acquisition of host heme, a source of iron during bacterial infection, and is therefore an important virulence factor. Captures host hemoproteins and their iron-containing heme molecules, and transfers the heme to the cell surface heme-binding protein Shp. Plays a pivotal role in iron acquisition and growth under iron-starvation conditions. Uses a cap and release mechanism in which Shr forms a dynamic complex with hemoglobin that enables the gated release of its most labile heme molecule. This mechanism exploits the hemoglobin beta subunit's inherent weaker affinity for heme, allowing S.pyogenes to preferentially capture only heme-saturated forms of hemoglobin that contain iron. In vitro, binds directly to a variety of heme-containing proteins, including hemoglobin, myoglobin, heme albumin and the hemoglobin-haptoglobin complex. It also binds to and acquires heme from methemoglobin, the ferric form of hemoglobin, which is likely to be a physiologically relevant heme source for the hemolytic group A streptococcus (GAS). Seems to have an inherent ability to reduce the ferric heme present in methemoglobin to ferrous heme and to provide a stable environment for the produced ferrous complex. Does not bind apohemoglobin, apohaptoglobin, fibrinogen or streptavidin, indicating that it specifically recognizes hemoproteins. Its function is as follows. In addition to its role in heme acquisition, functions as an adhesin, contributing to host cell adhesion and hence virulence. Specifically binds to extracellular matrix (ECM) components, including fibronectin and laminin, and mediates bacterial attachment to host epithelial cells. The polypeptide is Streptococcal hemoprotein receptor (Streptococcus pyogenes serotype M1).